Reading from the N-terminus, the 396-residue chain is NADH-quinone oxidoreductase subunit D (396 aa).

Belongs to the complex I 49 kDa subunit family. NDH-1 is composed of 14 different subunits. Subunits NuoB, C, D, E, F, and G constitute the peripheral sector of the complex.

Its subcellular location is the cell inner membrane. The catalysed reaction is a quinone + NADH + 5 H(+)(in) = a quinol + NAD(+) + 4 H(+)(out). NDH-1 shuttles electrons from NADH, via FMN and iron-sulfur (Fe-S) centers, to quinones in the respiratory chain. The immediate electron acceptor for the enzyme in this species is believed to be ubiquinone. Couples the redox reaction to proton translocation (for every two electrons transferred, four hydrogen ions are translocated across the cytoplasmic membrane), and thus conserves the redox energy in a proton gradient. The sequence is that of NADH-quinone oxidoreductase subunit D from Rhodopseudomonas palustris (strain BisA53).